The following is a 611-amino-acid chain: Endo-1,4-beta-xylanase A (611 aa).

The first 26 residues, Met-1 to Ala-26, serve as a signal peptide directing secretion. One can recognise a CBM2 domain in the interval Gln-27 to Ser-128. 3 disulfide bridges follow: Cys-31–Cys-125, Cys-184–Cys-215, and Cys-194–Cys-209. The CBM10 domain maps to Gln-183–Arg-212. The region spanning Ser-281–Ala-607 is the GH10 domain. Residue Glu-391 is the Proton donor of the active site. The Nucleophile role is filled by Glu-510.

Belongs to the glycosyl hydrolase 10 (cellulase F) family.

The enzyme catalyses Endohydrolysis of (1-&gt;4)-beta-D-xylosidic linkages in xylans.. It functions in the pathway glycan degradation; xylan degradation. The protein is Endo-1,4-beta-xylanase A (xynA) of Cellvibrio japonicus (strain Ueda107) (Pseudomonas fluorescens subsp. cellulosa).